Here is a 230-residue protein sequence, read N- to C-terminus: 5'-methylthioadenosine/S-adenosylhomocysteine nucleosidase (230 aa).

Glu12 serves as the catalytic Proton acceptor. Residues Gly78, Val152, and 173–174 (ME) contribute to the substrate site. Asp197 (proton donor) is an active-site residue.

The protein belongs to the PNP/UDP phosphorylase family. MtnN subfamily.

It carries out the reaction S-adenosyl-L-homocysteine + H2O = S-(5-deoxy-D-ribos-5-yl)-L-homocysteine + adenine. It catalyses the reaction S-methyl-5'-thioadenosine + H2O = 5-(methylsulfanyl)-D-ribose + adenine. The catalysed reaction is 5'-deoxyadenosine + H2O = 5-deoxy-D-ribose + adenine. The protein operates within amino-acid biosynthesis; L-methionine biosynthesis via salvage pathway; S-methyl-5-thio-alpha-D-ribose 1-phosphate from S-methyl-5'-thioadenosine (hydrolase route): step 1/2. Functionally, catalyzes the irreversible cleavage of the glycosidic bond in both 5'-methylthioadenosine (MTA) and S-adenosylhomocysteine (SAH/AdoHcy) to adenine and the corresponding thioribose, 5'-methylthioribose and S-ribosylhomocysteine, respectively. Also cleaves 5'-deoxyadenosine, a toxic by-product of radical S-adenosylmethionine (SAM) enzymes, into 5-deoxyribose and adenine. This chain is 5'-methylthioadenosine/S-adenosylhomocysteine nucleosidase, found in Glaesserella parasuis serovar 5 (strain SH0165) (Haemophilus parasuis).